Consider the following 293-residue polypeptide: Cell adhesion molecule CEACAM21 (293 aa).

The signal sequence occupies residues 1–34 (MGPPSACPHRECIPWQGLLLTASLLTFWNAPTTA). Residues 35-240 (WLFIASAPFE…TVKSDDNTLG (206 aa)) lie on the Extracellular side of the membrane. Asn111 carries an N-linked (GlcNAc...) asparagine glycan. The Ig-like C2-type domain occupies 147 to 231 (PSIQASSTTV…SNRSDPLKLT (85 aa)). Cys166 and Cys214 are joined by a disulfide. The chain crosses the membrane as a helical span at residues 241–261 (ILIGVLVGSLLVAALVCFLLL). Residues 262–293 (RKTGRASDQSDFREQQPPASTPGHGPSDSSIS) lie on the Cytoplasmic side of the membrane. Positions 267–293 (ASDQSDFREQQPPASTPGHGPSDSSIS) are disordered.

It belongs to the immunoglobulin superfamily. CEA family.

It is found in the membrane. The sequence is that of Cell adhesion molecule CEACAM21 from Homo sapiens (Human).